The sequence spans 234 residues: Lipoprotein-releasing system ATP-binding protein LolD (234 aa).

Positions 7 to 234 (LLCNNLCKKY…QDELTVTGAL (228 aa)) constitute an ABC transporter domain. 43–50 (GSSGSGKS) contributes to the ATP binding site.

The protein belongs to the ABC transporter superfamily. Lipoprotein translocase (TC 3.A.1.125) family. The complex is composed of two ATP-binding proteins (LolD) and two transmembrane proteins (LolC and LolE).

It localises to the cell inner membrane. Part of the ABC transporter complex LolCDE involved in the translocation of mature outer membrane-directed lipoproteins, from the inner membrane to the periplasmic chaperone, LolA. Responsible for the formation of the LolA-lipoprotein complex in an ATP-dependent manner. This chain is Lipoprotein-releasing system ATP-binding protein LolD, found in Photorhabdus laumondii subsp. laumondii (strain DSM 15139 / CIP 105565 / TT01) (Photorhabdus luminescens subsp. laumondii).